The sequence spans 403 residues: S-adenosylmethionine synthase (403 aa).

His-16 contributes to the ATP binding site. Residue Asp-18 coordinates Mg(2+). A K(+)-binding site is contributed by Glu-44. The L-methionine site is built by Glu-57 and Gln-110. Positions 110–120 (QSAHIAQGVDA) are flexible loop. Residues 175–177 (DSK), Asp-253, 259–260 (RK), Ala-276, and Lys-280 each bind ATP. Residue Asp-253 coordinates L-methionine. Lys-284 is a binding site for L-methionine.

Belongs to the AdoMet synthase family. Homotetramer; dimer of dimers. Mg(2+) is required as a cofactor. The cofactor is K(+).

It localises to the cytoplasm. It carries out the reaction L-methionine + ATP + H2O = S-adenosyl-L-methionine + phosphate + diphosphate. It participates in amino-acid biosynthesis; S-adenosyl-L-methionine biosynthesis; S-adenosyl-L-methionine from L-methionine: step 1/1. Functionally, catalyzes the formation of S-adenosylmethionine (AdoMet) from methionine and ATP. The overall synthetic reaction is composed of two sequential steps, AdoMet formation and the subsequent tripolyphosphate hydrolysis which occurs prior to release of AdoMet from the enzyme. The sequence is that of S-adenosylmethionine synthase from Erythrobacter litoralis (strain HTCC2594).